The following is a 61-amino-acid chain: Small ribosomal subunit protein uS14 (61 aa).

4 residues coordinate Zn(2+): Cys-24, Cys-27, Cys-40, and Cys-43.

This sequence belongs to the universal ribosomal protein uS14 family. Zinc-binding uS14 subfamily. As to quaternary structure, part of the 30S ribosomal subunit. Contacts proteins S3 and S10. It depends on Zn(2+) as a cofactor.

Functionally, binds 16S rRNA, required for the assembly of 30S particles and may also be responsible for determining the conformation of the 16S rRNA at the A site. This chain is Small ribosomal subunit protein uS14, found in Roseiflexus sp. (strain RS-1).